Here is a 74-residue protein sequence, read N- to C-terminus: Homeobox protein H40 (74 aa).

Residues 8–67 constitute a DNA-binding region (homeobox); sequence ARRARTAFTYEQLVALENKFKTTRYLSVCERLNLALSLSLTETQVKIWFQNRRTKWKKQN.

The protein resides in the nucleus. This Apis mellifera (Honeybee) protein is Homeobox protein H40.